Reading from the N-terminus, the 379-residue chain is Alcohol dehydrogenase class-2 isozyme 2 (379 aa).

Residues Cys47, His69, Cys99, Cys102, Cys105, Cys113, and Cys176 each contribute to the Zn(2+) site. NAD(+) is bound by residues 205-210 (GLGGVG), Asp229, Lys234, 298-300 (VGV), and Arg374.

Belongs to the zinc-containing alcohol dehydrogenase family. Class-II subfamily. Homodimer. Zn(2+) serves as cofactor.

It localises to the cytoplasm. The catalysed reaction is a primary alcohol + NAD(+) = an aldehyde + NADH + H(+). It carries out the reaction a secondary alcohol + NAD(+) = a ketone + NADH + H(+). The sequence is that of Alcohol dehydrogenase class-2 isozyme 2 (ADH2-2) from Oryctolagus cuniculus (Rabbit).